A 315-amino-acid polypeptide reads, in one-letter code: Probable cell division protein kinase ECU11_1290 (315 aa).

The 282-residue stretch at 13-294 (YEKVCRISSG…ASQGLCSGFV (282 aa)) folds into the Protein kinase domain. ATP-binding positions include 19–27 (ISSGSFGNV) and Lys42. The active-site Proton acceptor is the Asp138.

Belongs to the protein kinase superfamily. CMGC Ser/Thr protein kinase family. CDC2/CDKX subfamily.

The protein resides in the nucleus. The catalysed reaction is L-seryl-[protein] + ATP = O-phospho-L-seryl-[protein] + ADP + H(+). The enzyme catalyses L-threonyl-[protein] + ATP = O-phospho-L-threonyl-[protein] + ADP + H(+). In terms of biological role, may play a role in the control of the eukaryotic cell cycle. In Encephalitozoon cuniculi (strain GB-M1) (Microsporidian parasite), this protein is Probable cell division protein kinase ECU11_1290.